The following is a 246-amino-acid chain: Probable phosphatase Tola_0828 (246 aa).

Positions 8, 10, 16, 41, 74, 102, 132, 193, and 195 each coordinate Zn(2+).

Belongs to the PHP family. Zn(2+) is required as a cofactor.

This Tolumonas auensis (strain DSM 9187 / NBRC 110442 / TA 4) protein is Probable phosphatase Tola_0828.